A 207-amino-acid chain; its full sequence is 8-oxoguanine DNA glycosylase/AP lyase (207 aa).

Residues Lys-128 and Asp-146 contribute to the active site.

It belongs to the type-2 OGG1 family.

It carries out the reaction 2'-deoxyribonucleotide-(2'-deoxyribose 5'-phosphate)-2'-deoxyribonucleotide-DNA = a 3'-end 2'-deoxyribonucleotide-(2,3-dehydro-2,3-deoxyribose 5'-phosphate)-DNA + a 5'-end 5'-phospho-2'-deoxyribonucleoside-DNA + H(+). In terms of biological role, catalyzes the excision of an oxidatively damaged form of guanine (7,8-dihydro-8-oxoguanine = 8-oxoG) from DNA. Also cleaves the DNA backbone at apurinic/apyrimidinic sites (AP sites). This Saccharolobus islandicus (strain L.S.2.15 / Lassen #1) (Sulfolobus islandicus) protein is 8-oxoguanine DNA glycosylase/AP lyase.